Consider the following 312-residue polypeptide: Malate dehydrogenase (312 aa).

NAD(+)-binding positions include 12–17 and Asp36; that span reads GAGFTG. Residues Arg87 and Arg93 each contribute to the substrate site. NAD(+)-binding positions include Asn100 and 123 to 125; that span reads LTN. A substrate-binding site is contributed by Asn125. Ser149 carries the phosphoserine modification. Residue Arg156 participates in substrate binding. The active-site Proton acceptor is the His180.

It belongs to the LDH/MDH superfamily. MDH type 3 family.

The catalysed reaction is (S)-malate + NAD(+) = oxaloacetate + NADH + H(+). Catalyzes the reversible oxidation of malate to oxaloacetate. The polypeptide is Malate dehydrogenase (Bacillus cereus (strain ZK / E33L)).